The chain runs to 438 residues: tRNA-2-methylthio-N(6)-dimethylallyladenosine synthase (438 aa).

The MTTase N-terminal domain occupies 3–123; it reads KRLFVKTYGC…LPEMVAQAAR (121 aa). Residues cysteine 12, cysteine 48, cysteine 86, cysteine 160, cysteine 164, and cysteine 167 each contribute to the [4Fe-4S] cluster site. The region spanning 146-374 is the Radical SAM core domain; it reads HAEGTSAFLS…QALLLDQTMR (229 aa). The region spanning 377 to 438 is the TRAM domain; it reads HACVGREMRI…HPNSLEAVPA (62 aa).

The protein belongs to the methylthiotransferase family. MiaB subfamily. Monomer. The cofactor is [4Fe-4S] cluster.

Its subcellular location is the cytoplasm. It carries out the reaction N(6)-dimethylallyladenosine(37) in tRNA + (sulfur carrier)-SH + AH2 + 2 S-adenosyl-L-methionine = 2-methylsulfanyl-N(6)-dimethylallyladenosine(37) in tRNA + (sulfur carrier)-H + 5'-deoxyadenosine + L-methionine + A + S-adenosyl-L-homocysteine + 2 H(+). In terms of biological role, catalyzes the methylthiolation of N6-(dimethylallyl)adenosine (i(6)A), leading to the formation of 2-methylthio-N6-(dimethylallyl)adenosine (ms(2)i(6)A) at position 37 in tRNAs that read codons beginning with uridine. The sequence is that of tRNA-2-methylthio-N(6)-dimethylallyladenosine synthase from Paramagnetospirillum magneticum (strain ATCC 700264 / AMB-1) (Magnetospirillum magneticum).